The primary structure comprises 381 residues: Zinc finger CCCH domain-containing protein 61 (381 aa).

Residues 1–39 (MDVEHHKSGHISRPTVDIPPRKLLSSAKSPSSVSSPLRD) form a disordered region. Residues 21-37 (RKLLSSAKSPSSVSSPL) show a composition bias toward low complexity. 2 consecutive C3H1-type zinc fingers follow at residues 101 to 128 (YTGE…HGVF) and 137 to 159 (YRTE…AHSP).

Interacts with MARD1/FLZ9 and RD21A via its CCCH zing finger domains.

The protein localises to the cytoplasm. It localises to the stress granule. It is found in the P-body. The sequence is that of Zinc finger CCCH domain-containing protein 61 from Arabidopsis thaliana (Mouse-ear cress).